Consider the following 303-residue polypeptide: Oxygen-dependent coproporphyrinogen-III oxidase (303 aa).

Serine 93 serves as a coordination point for substrate. A divalent metal cation is bound by residues histidine 97 and histidine 107. Histidine 107 (proton donor) is an active-site residue. Position 109-111 (109-111 (NVR)) interacts with substrate. Positions 146 and 176 each coordinate a divalent metal cation. The segment at 241–276 (YVEFNLVYDRGTLFGLQSGGRTESILMSLPPQVRWG) is important for dimerization. Residue 259 to 261 (GGR) coordinates substrate.

This sequence belongs to the aerobic coproporphyrinogen-III oxidase family. Homodimer. A divalent metal cation serves as cofactor.

The protein localises to the cytoplasm. The catalysed reaction is coproporphyrinogen III + O2 + 2 H(+) = protoporphyrinogen IX + 2 CO2 + 2 H2O. The protein operates within porphyrin-containing compound metabolism; protoporphyrin-IX biosynthesis; protoporphyrinogen-IX from coproporphyrinogen-III (O2 route): step 1/1. Involved in the heme biosynthesis. Catalyzes the aerobic oxidative decarboxylation of propionate groups of rings A and B of coproporphyrinogen-III to yield the vinyl groups in protoporphyrinogen-IX. The polypeptide is Oxygen-dependent coproporphyrinogen-III oxidase (Pseudomonas putida (strain W619)).